The following is a 383-amino-acid chain: Serine protease 23 (383 aa).

The N-terminal stretch at Met1–Pro23 is a signal peptide. N-linked (GlcNAc...) asparagine glycosylation is present at Asn93. Cys160 and Cys176 form a disulfide bridge. Residue His175 is the Charge relay system of the active site. The N-linked (GlcNAc...) asparagine glycan is linked to Asn207. Residues Asp240 and Ser316 each act as charge relay system in the active site.

This sequence belongs to the peptidase S1 family.

The protein localises to the secreted. This is Serine protease 23 (Prss23) from Rattus norvegicus (Rat).